The following is a 327-amino-acid chain: Lipid phosphate phosphatase 1 (327 aa).

6 consecutive transmembrane segments (helical) span residues W51–Y71, I93–L113, V118–I138, F187–S207, G217–I237, and W244–C264.

Belongs to the PA-phosphatase related phosphoesterase family. As to expression, strongly expressed in leaves, moderately in roots, weakly in floral hamps and flower buds, and not detected in adult flowers and seedpods.

It is found in the membrane. With respect to regulation, PA phosphatase activity inhibited by N-ethylmaleimide with an IC(50) value of 10 mM. Functionally, plays a general role in cellular responses to stress, may be by attenuating the signal produced by phospholipases. Exhibits both diacylglycerol pyrophosphate (DGPP) phosphatase and phosphatidate (PA) phosphatase activities. Substrate preference is diacylglycerol pyrophosphate &gt; phosphatidate. In Arabidopsis thaliana (Mouse-ear cress), this protein is Lipid phosphate phosphatase 1 (LPP1).